Reading from the N-terminus, the 364-residue chain is Nucleosome assembly protein 1;2 (364 aa).

A coiled-coil region spans residues 32–86; it reads VESIKNTLQGLAARHTDVLESLEPKVRKRVEVLREIQSQHDDLEAKFFEERAALE. The short motif at 53–68 is the Nuclear export signal element; the sequence is LEPKVRKRVEVLREIQ. Positions 227-232 match the Nuclear localization signal motif; the sequence is KKKPKK. 2 disordered regions span residues 250-269 and 301-364; these read FNFF…DEDT and GEAA…CKQQ. Acidic residues-rich tracts occupy residues 259–269 and 304–340; these read PDDDEEIDEDT and AQDE…DDED. Cysteine 361 is subject to Cysteine methyl ester. A lipid anchor (S-farnesyl cysteine) is attached at cysteine 361. Positions 362–364 are cleaved as a propeptide — removed in mature form; that stretch reads KQQ.

Belongs to the nucleosome assembly protein (NAP) family. Binds preferentially histone H1 in vitro. Highly expressed in tissues exhibiting active cell-division activities, such as root and shoot meristems and young flowers.

The protein localises to the nucleus. The protein resides in the cytoplasm. Its function is as follows. May modulate chromatin structure by regulation of nucleosome assembly/disassembly. In Oryza sativa subsp. indica (Rice), this protein is Nucleosome assembly protein 1;2 (NAP1;2).